The sequence spans 227 residues: Cytidylate kinase (227 aa).

ATP is bound at residue 12–20 (GPSGAGKGT).

Belongs to the cytidylate kinase family. Type 1 subfamily.

Its subcellular location is the cytoplasm. The catalysed reaction is CMP + ATP = CDP + ADP. It catalyses the reaction dCMP + ATP = dCDP + ADP. In Escherichia fergusonii (strain ATCC 35469 / DSM 13698 / CCUG 18766 / IAM 14443 / JCM 21226 / LMG 7866 / NBRC 102419 / NCTC 12128 / CDC 0568-73), this protein is Cytidylate kinase.